The chain runs to 302 residues: Elongation factor Ts (302 aa).

The involved in Mg(2+) ion dislocation from EF-Tu stretch occupies residues 80-83 (TDFV).

This sequence belongs to the EF-Ts family.

Its subcellular location is the cytoplasm. Associates with the EF-Tu.GDP complex and induces the exchange of GDP to GTP. It remains bound to the aminoacyl-tRNA.EF-Tu.GTP complex up to the GTP hydrolysis stage on the ribosome. This Methylibium petroleiphilum (strain ATCC BAA-1232 / LMG 22953 / PM1) protein is Elongation factor Ts.